A 297-amino-acid chain; its full sequence is MSKKPTTKKEVQTTGHQWDGIEELNTPLPRWWLWTFYATIIWGVAYSIAMPAWPIFSDKATPGLLGSSTRADVEKDIAKFAEMNKAVEEKLVATDLTAIAADPELVTYTRNAGAAVFRTWCAQCHGAGAGGNTGFPSLLDGDWLHGGAIETIYTNVKHGIRDPLDPDTLLVANMPAHLTDELLEPAQIDEVVQYVLQISGQPADEVKATAGQQIFAENCASCHGEDAKGLVEMGAPNLTDGIWLYGGDVATLTSTIQYGRGGVMPSWSWAADGAKPRLSEAQIRAVASYVHSLGGGQ.

Over 1-35 (MSKKPTTKKEVQTTGHQWDGIEELNTPLPRWWLWT) the chain is Cytoplasmic. The helical transmembrane segment at 36–56 (FYATIIWGVAYSIAMPAWPIF) threads the bilayer. Residues 57–297 (SDKATPGLLG…SYVHSLGGGQ (241 aa)) are Periplasmic-facing. Cytochrome c domains are found at residues 108 to 199 (YTRN…LQIS) and 206 to 294 (VKAT…HSLG). Heme c-binding residues include cysteine 121, cysteine 124, histidine 125, methionine 174, cysteine 219, cysteine 222, histidine 223, and methionine 264.

The protein belongs to the CcoP / FixP family. In terms of assembly, component of the cbb3-type cytochrome c oxidase at least composed of CcoN, CcoO, CcoQ and CcoP. Interacts with CcoQ. Heme c serves as cofactor.

The protein localises to the cell inner membrane. It functions in the pathway energy metabolism; oxidative phosphorylation. Functionally, C-type cytochrome. Part of the cbb3-type cytochrome c oxidase complex. CcoP subunit is required for transferring electrons from donor cytochrome c via its heme groups to CcoO subunit. From there, electrons are shuttled to the catalytic binuclear center of CcoN subunit where oxygen reduction takes place. The complex also functions as a proton pump. This is Cbb3-type cytochrome c oxidase subunit CcoP from Rhodobacter capsulatus (Rhodopseudomonas capsulata).